We begin with the raw amino-acid sequence, 344 residues long: L-rhamnose-proton symporter (344 aa).

10 helical membrane passes run 4–24 (AITM…CFYA), 38–58 (WSVG…ALLL), 68–88 (FSLS…IGNI), 101–121 (MGIG…TPII), 137–157 (TLLG…AGQL), 175–195 (LVLA…MNAA), 214–234 (LPSY…FCFI), 259–279 (VLLS…YAWG), 290–310 (ISWM…GLVL), and 323–343 (VLSL…IGMA).

The protein belongs to the L-rhamnose transporter (TC 2.A.7.6) family.

The protein resides in the cell inner membrane. It carries out the reaction L-rhamnopyranose(in) + H(+)(in) = L-rhamnopyranose(out) + H(+)(out). In terms of biological role, uptake of L-rhamnose across the cytoplasmic membrane with the concomitant transport of protons into the cell (symport system). The sequence is that of L-rhamnose-proton symporter from Shigella sonnei (strain Ss046).